We begin with the raw amino-acid sequence, 398 residues long: Argininosuccinate synthase (398 aa).

8 to 16 (AYSGGLDTS) contacts ATP. Y87 is a binding site for L-citrulline. Position 117 (G117) interacts with ATP. L-aspartate contacts are provided by T119, N123, and D124. N123 contacts L-citrulline. Positions 127, 175, 260, and 272 each coordinate L-citrulline.

The protein belongs to the argininosuccinate synthase family. Type 1 subfamily. Homotetramer.

It localises to the cytoplasm. The catalysed reaction is L-citrulline + L-aspartate + ATP = 2-(N(omega)-L-arginino)succinate + AMP + diphosphate + H(+). Its pathway is amino-acid biosynthesis; L-arginine biosynthesis; L-arginine from L-ornithine and carbamoyl phosphate: step 2/3. The protein is Argininosuccinate synthase of Mycobacterium marinum (strain ATCC BAA-535 / M).